The primary structure comprises 215 residues: Urease accessory protein UreG (215 aa).

A disordered region spans residues 1–21 (MNAPAPSSARRTKKLPPLRVG). 24–31 (GPVGSGKT) is a binding site for GTP.

It belongs to the SIMIBI class G3E GTPase family. UreG subfamily. As to quaternary structure, homodimer. UreD, UreF and UreG form a complex that acts as a GTP-hydrolysis-dependent molecular chaperone, activating the urease apoprotein by helping to assemble the nickel containing metallocenter of UreC. The UreE protein probably delivers the nickel.

The protein localises to the cytoplasm. Its function is as follows. Facilitates the functional incorporation of the urease nickel metallocenter. This process requires GTP hydrolysis, probably effectuated by UreG. The polypeptide is Urease accessory protein UreG (Burkholderia lata (strain ATCC 17760 / DSM 23089 / LMG 22485 / NCIMB 9086 / R18194 / 383)).